We begin with the raw amino-acid sequence, 145 residues long: Transcriptional regulator MraZ (145 aa).

SpoVT-AbrB domains lie at 5–50 (TFNH…ALPQ) and 81–124 (AHEV…DKAA).

This sequence belongs to the MraZ family. Forms oligomers.

Its subcellular location is the cytoplasm. It localises to the nucleoid. The sequence is that of Transcriptional regulator MraZ from Anaeromyxobacter sp. (strain Fw109-5).